A 439-amino-acid polypeptide reads, in one-letter code: Glutamine synthetase (439 aa).

One can recognise a GS beta-grasp domain in the interval 12–93; it reads SKIKFVQLVF…VYGFIYKDNK (82 aa). In terms of domain architecture, GS catalytic spans 99–439; the sequence is PRGILKRALE…EWELERYFFL (341 aa). Mg(2+) is bound by residues Glu122 and Glu124. Residue Glu172 participates in ATP binding. Mg(2+)-binding residues include Glu177 and Glu184. Gly229 is an L-glutamate binding site. His233 lines the Mg(2+) pocket. ATP contacts are provided by residues 235-237 and Ser237; that span reads HIS. Residues Arg283, Glu289, and Arg301 each coordinate L-glutamate. Residues Arg301, Arg306, and Lys313 each contribute to the ATP site. Residue Glu318 coordinates Mg(2+). Arg320 contacts L-glutamate.

The protein belongs to the glutamine synthetase family. In terms of assembly, oligomer of 12 subunits arranged in the form of two hexagons. Mg(2+) is required as a cofactor.

Its subcellular location is the cytoplasm. It catalyses the reaction L-glutamate + NH4(+) + ATP = L-glutamine + ADP + phosphate + H(+). Functionally, probably involved in nitrogen metabolism via ammonium assimilation. Catalyzes the ATP-dependent biosynthesis of glutamine from glutamate and ammonia. This chain is Glutamine synthetase, found in Pyrococcus furiosus (strain ATCC 43587 / DSM 3638 / JCM 8422 / Vc1).